The primary structure comprises 315 residues: Methionyl-tRNA formyltransferase (315 aa).

113-116 (SILP) serves as a coordination point for (6S)-5,6,7,8-tetrahydrofolate.

It belongs to the Fmt family.

The catalysed reaction is L-methionyl-tRNA(fMet) + (6R)-10-formyltetrahydrofolate = N-formyl-L-methionyl-tRNA(fMet) + (6S)-5,6,7,8-tetrahydrofolate + H(+). In terms of biological role, attaches a formyl group to the free amino group of methionyl-tRNA(fMet). The formyl group appears to play a dual role in the initiator identity of N-formylmethionyl-tRNA by promoting its recognition by IF2 and preventing the misappropriation of this tRNA by the elongation apparatus. This chain is Methionyl-tRNA formyltransferase, found in Aliivibrio fischeri (strain ATCC 700601 / ES114) (Vibrio fischeri).